A 461-amino-acid chain; its full sequence is Probable lipid II flippase MurJ (461 aa).

Helical transmembrane passes span 5–25 (ILGAGVYSDIFFVAFKLPNLF), 51–71 (FASLVGLIFCIVLFMWCLLVA), 96–116 (IVAINFWYLLLVFITTFLGAL), 123–143 (FFASAYSASLLNVCMILALLI), 156–176 (LSYGVLLGGVAQILLHFYPLV), 229–249 (IASFLDTTIASFLASGSVSYL), 258–278 (LPLALFAIAISTALFPSIAIA), 293–313 (KAWFFLVGVLLLCSIGGIMLS), 337–357 (VFSLYLLGLLPFGLTKLFSLW), 372–392 (LISLFLGLAASLSLMPLLGVL), 402–422 (GLFLFVLTIKAFGFQLFLGII), and 429–449 (LVILFLACVEILLLLAFKSWV).

The protein belongs to the MurJ/MviN family.

Its subcellular location is the cell inner membrane. The protein operates within cell wall biogenesis; peptidoglycan biosynthesis. Involved in peptidoglycan biosynthesis. Transports lipid-linked peptidoglycan precursors from the inner to the outer leaflet of the cytoplasmic membrane. This Helicobacter pylori (strain ATCC 700392 / 26695) (Campylobacter pylori) protein is Probable lipid II flippase MurJ.